We begin with the raw amino-acid sequence, 345 residues long: MRVTDFSFDLPDELIARYPMAQRNASRLLTLDGNTGTLADKQFTDLLGMINPGDLMVFNNTRVIPARLFGQKASGGKLEILVERMLDDKRILAHVRSSKSPKVDSIIHLDGGYEMKMAARHDALFELELLSDLTILEVLEAVGHMPLPPYIDRPDEDADKERYQTVYNQNPGAVAAPTAGLHFDDAMLEALKAKGVNIAFVTLHVGAGTFQPVRVDNVLEHKMHSEWANVPQDVVDLIVQTKAAGKRVVAVGTTSVRSLESAARASEGELKAFSGDTDIFIYPGYQFQIVDAMITNFHLPESTLIMLVSAFAGFDHVMAAYQHAITQKYRFFSYGDAMFVTKKAH.

This sequence belongs to the QueA family. As to quaternary structure, monomer.

The protein localises to the cytoplasm. It carries out the reaction 7-aminomethyl-7-carbaguanosine(34) in tRNA + S-adenosyl-L-methionine = epoxyqueuosine(34) in tRNA + adenine + L-methionine + 2 H(+). It participates in tRNA modification; tRNA-queuosine biosynthesis. Transfers and isomerizes the ribose moiety from AdoMet to the 7-aminomethyl group of 7-deazaguanine (preQ1-tRNA) to give epoxyqueuosine (oQ-tRNA). The chain is S-adenosylmethionine:tRNA ribosyltransferase-isomerase from Shewanella sp. (strain MR-7).